A 353-amino-acid chain; its full sequence is H(2)-forming methylenetetrahydromethanopterin dehydrogenase-related protein MJ1338 (353 aa).

It belongs to the HMD family.

The polypeptide is H(2)-forming methylenetetrahydromethanopterin dehydrogenase-related protein MJ1338 (Methanocaldococcus jannaschii (strain ATCC 43067 / DSM 2661 / JAL-1 / JCM 10045 / NBRC 100440) (Methanococcus jannaschii)).